Consider the following 457-residue polypeptide: Argininosuccinate lyase (457 aa).

This sequence belongs to the lyase 1 family. Argininosuccinate lyase subfamily.

The protein localises to the cytoplasm. It catalyses the reaction 2-(N(omega)-L-arginino)succinate = fumarate + L-arginine. It participates in amino-acid biosynthesis; L-arginine biosynthesis; L-arginine from L-ornithine and carbamoyl phosphate: step 3/3. This Escherichia fergusonii (strain ATCC 35469 / DSM 13698 / CCUG 18766 / IAM 14443 / JCM 21226 / LMG 7866 / NBRC 102419 / NCTC 12128 / CDC 0568-73) protein is Argininosuccinate lyase.